We begin with the raw amino-acid sequence, 140 residues long: Organic hydroperoxide resistance protein-like (140 aa).

This sequence belongs to the OsmC/Ohr family.

This is Organic hydroperoxide resistance protein-like from Staphylococcus aureus (strain MRSA252).